Here is a 745-residue protein sequence, read N- to C-terminus: Cellulose synthase-like protein E2 (745 aa).

The span at 1 to 14 shows a compositional bias: gly residues; the sequence is MAGSGGGVVSGGRQ. Residues 1–20 form a disordered region; it reads MAGSGGGVVSGGRQRGPPLF. Helical transmembrane passes span 29-49 and 66-86; these read AMAA…LIWL and WAWL…VLTL. Residues Asp155 and Asp458 contribute to the active site. 5 consecutive transmembrane segments (helical) span residues 541–561, 568–588, 658–678, 686–706, and 723–743; these read FPTL…ISLF, WFIP…AESL, AMFV…VLGI, GPGG…IVAI, and LPAS…ILSI.

The protein belongs to the glycosyltransferase 2 family. Plant cellulose synthase-like E subfamily.

The protein localises to the golgi apparatus membrane. Thought to be a Golgi-localized beta-glycan synthase that polymerize the backbones of noncellulosic polysaccharides (hemicelluloses) of plant cell wall. This Oryza sativa subsp. japonica (Rice) protein is Cellulose synthase-like protein E2 (CSLE2).